We begin with the raw amino-acid sequence, 311 residues long: Putative ankyrin repeat protein RF_0923 (311 aa).

ANK repeat units lie at residues 42 to 71 (IDNTALIWAVDKGLEKVCEMLIPKMSEQAI), 77 to 106 (NGNTALTLAASKGLEKICELLIPKMSPQAI), 112 to 141 (NGNTALTWAAWKDLEKICEMLIPKMSPQAI), 147 to 176 (NGNTALILAAWKGLEKICKILIPKMFEQAI), and 182 to 213 (KGCTALTLAADKDLKKIYELLINKMSIDAINH).

The protein is Putative ankyrin repeat protein RF_0923 of Rickettsia felis (strain ATCC VR-1525 / URRWXCal2) (Rickettsia azadi).